The following is a 213-amino-acid chain: NADH-quinone oxidoreductase subunit C (213 aa).

Belongs to the complex I 30 kDa subunit family. As to quaternary structure, NDH-1 is composed of 14 different subunits. Subunits NuoB, C, D, E, F, and G constitute the peripheral sector of the complex.

Its subcellular location is the cell inner membrane. It catalyses the reaction a quinone + NADH + 5 H(+)(in) = a quinol + NAD(+) + 4 H(+)(out). Its function is as follows. NDH-1 shuttles electrons from NADH, via FMN and iron-sulfur (Fe-S) centers, to quinones in the respiratory chain. The immediate electron acceptor for the enzyme in this species is believed to be ubiquinone. Couples the redox reaction to proton translocation (for every two electrons transferred, four hydrogen ions are translocated across the cytoplasmic membrane), and thus conserves the redox energy in a proton gradient. This chain is NADH-quinone oxidoreductase subunit C, found in Rhodospirillum rubrum (strain ATCC 11170 / ATH 1.1.1 / DSM 467 / LMG 4362 / NCIMB 8255 / S1).